We begin with the raw amino-acid sequence, 774 residues long: Protein translocase subunit SecA (774 aa).

ATP is bound by residues Q66, 84-88 (GEGKS), and D474.

The protein belongs to the SecA family.

Its subcellular location is the plastid. It localises to the chloroplast stroma. The protein localises to the chloroplast thylakoid membrane. It carries out the reaction ATP + H2O + cellular proteinSide 1 = ADP + phosphate + cellular proteinSide 2.. Its function is as follows. Has a central role in coupling the hydrolysis of ATP to the transfer of proteins across the thylakoid membrane. This Cyanidioschyzon merolae (strain NIES-3377 / 10D) (Unicellular red alga) protein is Protein translocase subunit SecA.